Reading from the N-terminus, the 447-residue chain is Tubulin beta-2 chain (447 aa).

GTP is bound by residues Q9, E67, S136, G140, T141, G142, N202, and N224. Residue E67 participates in Mg(2+) binding. Over residues 411–425 (SNMNDLVSEYQQYQD) the composition is skewed to polar residues. The interval 411-447 (SNMNDLVSEYQQYQDATAEEDEYEEEEEDYHQEHDEM) is disordered. Residues 427-440 (TAEEDEYEEEEEDY) are compositionally biased toward acidic residues.

The protein belongs to the tubulin family. As to quaternary structure, dimer of alpha and beta chains. A typical microtubule is a hollow water-filled tube with an outer diameter of 25 nm and an inner diameter of 15 nM. Alpha-beta heterodimers associate head-to-tail to form protofilaments running lengthwise along the microtubule wall with the beta-tubulin subunit facing the microtubule plus end conferring a structural polarity. Microtubules usually have 13 protofilaments but different protofilament numbers can be found in some organisms and specialized cells. The cofactor is Mg(2+).

It is found in the cytoplasm. It localises to the cytoskeleton. Tubulin is the major constituent of microtubules, a cylinder consisting of laterally associated linear protofilaments composed of alpha- and beta-tubulin heterodimers. Microtubules grow by the addition of GTP-tubulin dimers to the microtubule end, where a stabilizing cap forms. Below the cap, tubulin dimers are in GDP-bound state, owing to GTPase activity of alpha-tubulin. The polypeptide is Tubulin beta-2 chain (TUBB2) (Pisum sativum (Garden pea)).